The chain runs to 206 residues: Large ribosomal subunit protein uL4 (206 aa).

Positions 63–97 are disordered; it reads MYKQKGTGRARHHSARAPQFRGGGKAHGPVVRSHE. Over residues 64–77 the composition is skewed to basic residues; that stretch reads YKQKGTGRARHHSA.

The protein belongs to the universal ribosomal protein uL4 family. As to quaternary structure, part of the 50S ribosomal subunit.

Functionally, one of the primary rRNA binding proteins, this protein initially binds near the 5'-end of the 23S rRNA. It is important during the early stages of 50S assembly. It makes multiple contacts with different domains of the 23S rRNA in the assembled 50S subunit and ribosome. In terms of biological role, forms part of the polypeptide exit tunnel. This Rhizobium etli (strain CIAT 652) protein is Large ribosomal subunit protein uL4.